Here is a 235-residue protein sequence, read N- to C-terminus: MTELARLKFYATQPHSCSYLPDEQATTLFLDPSQPMDVHVYADLSEMGFRRSGDHLYRPHCQNCNACVPARIPATQFLPSRQQKRIIKRNSDLTVHAAKPCFSEEYFDLYQRYIEQRHADGDMFPPSRDQFSTFLVRDLPFSRFYEFRLDGRLLAVAVTDLLPNGLSAVYTFYEPDEERRSLGRFAILWQIGETLRLGLDAVYLGYWIKNCKKMNYKTQYRPIELLVNQRWVILN.

It belongs to the R-transferase family. Bpt subfamily.

Its subcellular location is the cytoplasm. It carries out the reaction N-terminal L-glutamyl-[protein] + L-leucyl-tRNA(Leu) = N-terminal L-leucyl-L-glutamyl-[protein] + tRNA(Leu) + H(+). It catalyses the reaction N-terminal L-aspartyl-[protein] + L-leucyl-tRNA(Leu) = N-terminal L-leucyl-L-aspartyl-[protein] + tRNA(Leu) + H(+). Functionally, functions in the N-end rule pathway of protein degradation where it conjugates Leu from its aminoacyl-tRNA to the N-termini of proteins containing an N-terminal aspartate or glutamate. The polypeptide is Aspartate/glutamate leucyltransferase (Pseudomonas fluorescens (strain ATCC BAA-477 / NRRL B-23932 / Pf-5)).